Consider the following 472-residue polypeptide: tRNA modification GTPase MnmE (472 aa).

The (6S)-5-formyl-5,6,7,8-tetrahydrofolate site is built by arginine 28, glutamate 91, and lysine 130. The TrmE-type G domain maps to 225–391; the sequence is GAKVVLAGKT…LSEKAYSVLA (167 aa). Residue asparagine 235 coordinates K(+). Residues 235–240, 254–260, and 279–282 each bind GTP; these read NAGKSS, SDIHGTT, and DTAG. Position 239 (serine 239) interacts with Mg(2+). The K(+) site is built by serine 254, isoleucine 256, and threonine 259. Threonine 260 lines the Mg(2+) pocket. Lysine 472 is a (6S)-5-formyl-5,6,7,8-tetrahydrofolate binding site.

The protein belongs to the TRAFAC class TrmE-Era-EngA-EngB-Septin-like GTPase superfamily. TrmE GTPase family. As to quaternary structure, homodimer. Heterotetramer of two MnmE and two MnmG subunits. The cofactor is K(+).

It localises to the cytoplasm. Exhibits a very high intrinsic GTPase hydrolysis rate. Involved in the addition of a carboxymethylaminomethyl (cmnm) group at the wobble position (U34) of certain tRNAs, forming tRNA-cmnm(5)s(2)U34. The chain is tRNA modification GTPase MnmE from Treponema denticola (strain ATCC 35405 / DSM 14222 / CIP 103919 / JCM 8153 / KCTC 15104).